We begin with the raw amino-acid sequence, 1143 residues long: Major DNA-binding protein (1143 aa).

The tract at residues 1140–1143 (RMRL) is required for nuclear localization.

This sequence belongs to the herpesviridae major DNA-binding protein family. In terms of assembly, homooligomers. Forms double-helical filaments necessary for the formation of replication compartments within the host nucleus. Interacts with the origin-binding protein. Interacts with the helicase primase complex; this interaction stimulates primer synthesis activity of the helicase-primase complex. Interacts with the DNA polymerase. Interacts with the alkaline exonuclease; this interaction increases its nuclease processivity.

It is found in the host nucleus. In terms of biological role, plays several crucial roles in viral infection. Participates in the opening of the viral DNA origin to initiate replication by interacting with the origin-binding protein. May disrupt loops, hairpins and other secondary structures present on ssDNA to reduce and eliminate pausing of viral DNA polymerase at specific sites during elongation. Promotes viral DNA recombination by performing strand-transfer, characterized by the ability to transfer a DNA strand from a linear duplex to a complementary single-stranded DNA circle. Can also catalyze the renaturation of complementary single strands. Additionally, reorganizes the host cell nucleus, leading to the formation of prereplicative sites and replication compartments. This process is driven by the protein which can form double-helical filaments in the absence of DNA. This chain is Major DNA-binding protein, found in Elephantid herpesvirus 1 (isolate Asian elephant/Berlin/Kiba/1998) (EIHV-1).